The following is a 125-amino-acid chain: Small ribosomal subunit protein uS12 (125 aa).

Residues 9-31 (RQGREVEKIKSKSPAMENSPQRR) are disordered. Residue aspartate 89 is modified to 3-methylthioaspartic acid. A disordered region spans residues 106 to 125 (GVKDRKQSRSKYGAKRPKKA). Residues 113–125 (SRSKYGAKRPKKA) are compositionally biased toward basic residues.

It belongs to the universal ribosomal protein uS12 family. Part of the 30S ribosomal subunit. Contacts proteins S8 and S17. May interact with IF1 in the 30S initiation complex.

Functionally, with S4 and S5 plays an important role in translational accuracy. Interacts with and stabilizes bases of the 16S rRNA that are involved in tRNA selection in the A site and with the mRNA backbone. Located at the interface of the 30S and 50S subunits, it traverses the body of the 30S subunit contacting proteins on the other side and probably holding the rRNA structure together. The combined cluster of proteins S8, S12 and S17 appears to hold together the shoulder and platform of the 30S subunit. This Polaromonas sp. (strain JS666 / ATCC BAA-500) protein is Small ribosomal subunit protein uS12.